Consider the following 914-residue polypeptide: Translation initiation factor IF-2 (914 aa).

2 disordered regions span residues 52-84 (GGGKAAEGAAKAPAKAAAKGDAKTAAKGDVKAP) and 98-326 (AGGN…GVRL). Positions 57–68 (AEGAAKAPAKAA) are enriched in low complexity. Over residues 69–84 (AKGDAKTAAKGDVKAP) the composition is skewed to basic and acidic residues. Residues 98–138 (AGGNGEAAAPPAQPGGTATTPAAQATPEAPARPGPAAARPS) are compositionally biased toward low complexity. 2 stretches are compositionally biased toward pro residues: residues 139-169 (APAPGQPKPPAPGQPPRPGATPGPRPGPAPK) and 193-207 (PRPVPRPGAPRPGAP). Residues 236-296 (RPGGGRPGGP…GAAGAFGRPG (61 aa)) are compositionally biased toward gly residues. The span at 300–309 (RRGRKSKRQK) shows a compositional bias: basic residues. One can recognise a tr-type G domain in the interval 421–581 (TRPPVVTVMG…AVLLTADAAL (161 aa)). GTP is bound by residues 430–437 (GHVDHGKT), 469–473 (DTPGH), and 523–526 (NKID).

It belongs to the TRAFAC class translation factor GTPase superfamily. Classic translation factor GTPase family. IF-2 subfamily.

It is found in the cytoplasm. Its function is as follows. One of the essential components for the initiation of protein synthesis. Protects formylmethionyl-tRNA from spontaneous hydrolysis and promotes its binding to the 30S ribosomal subunits. Also involved in the hydrolysis of GTP during the formation of the 70S ribosomal complex. This is Translation initiation factor IF-2 from Mycobacterium avium (strain 104).